The sequence spans 167 residues: Small ribosomal subunit protein uS5 (167 aa).

An S5 DRBM domain is found at 11-74; that stretch reads LQEKLIAVNR…EKARRNMINV (64 aa).

The protein belongs to the universal ribosomal protein uS5 family. In terms of assembly, part of the 30S ribosomal subunit. Contacts proteins S4 and S8.

In terms of biological role, with S4 and S12 plays an important role in translational accuracy. Its function is as follows. Located at the back of the 30S subunit body where it stabilizes the conformation of the head with respect to the body. This Shigella dysenteriae serotype 1 (strain Sd197) protein is Small ribosomal subunit protein uS5.